The sequence spans 84 residues: Beta-toxin Tf1a (84 aa).

Residues Met1 to Cys20 form the signal peptide. The LCN-type CS-alpha/beta domain maps to Lys21–Gly82. Disulfide bonds link Cys31/Cys81, Cys35/Cys57, Cys43/Cys62, and Cys47/Cys64. Cys81 carries the post-translational modification Cysteine amide.

Belongs to the long (4 C-C) scorpion toxin superfamily. Sodium channel inhibitor family. Beta subfamily. As to expression, expressed by the venom gland.

The protein resides in the secreted. Its function is as follows. Beta toxins bind voltage-independently at site-4 of sodium channels (Nav) and shift the voltage of activation toward more negative potentials thereby affecting sodium channel activation and promoting spontaneous and repetitive firing. The toxin induces a leftward shift, on all channels tested (including Blattella germanica and Varroa destructor Nav1), displacing a change in voltage dependence activation to more hyperpolarized potentials. In addition, the toxin mostly inhibits peak current of hNav1.4/SCN4A (53% inhibition of peak current at 100 nM) and hNav1.5/SCN5A (71% inhibition). This chain is Beta-toxin Tf1a, found in Tityus fasciolatus (Central Brazilian scorpion).